The primary structure comprises 300 residues: Cell adhesion molecule CEACAM19 (300 aa).

The N-terminal stretch at 1 to 32 is a signal peptide; it reads MEIPMGTQGCFSKSLLLSASILVLWMLQGSQA. Residues 33-157 are Extracellular-facing; the sequence is ALYIQKIPEQ…PSTHLPTNAG (125 aa). N-linked (GlcNAc...) asparagine glycosylation is present at asparagine 104. Residues 158–178 traverse the membrane as a helical segment; sequence ILAATIIGSLAAGALLISCIA. Residues 179 to 300 are Cytoplasmic-facing; sequence YLLVTRNWRG…APYCQLVPTS (122 aa). The disordered stretch occupies residues 259–291; it reads SINPARPLPTPPHLQAEPENHQYQQDLLNPDPA.

The protein belongs to the immunoglobulin superfamily. CEA family. As to expression, ubiquitous with highest expression in prostate, uterus, fetal brain, mammary gland, adrenal gland, skeletal muscle, small intestine, and kidney, and lower expression in lung, cerebellum, testis, liver, pancreas, bone marrow and ovary.

The protein localises to the membrane. The protein is Cell adhesion molecule CEACAM19 of Homo sapiens (Human).